A 331-amino-acid polypeptide reads, in one-letter code: NADH-quinone oxidoreductase subunit H (331 aa).

The next 9 helical transmembrane spans lie at 5–25 (LFFVITTIVKAVVILAVMASL), 45–65 (GPDMVGPAGVLQIVADMIKLF), 78–98 (FIFLIAPLISAIAAFAALAPV), 122–142 (VLYIAGVAAVCVFSPLAAGLA), 156–176 (VVALLSFEVVAGMALLSVVMV), 192–212 (IFNWLIFKQPLAFVLFVMASF), 245–265 (FFIGEYTNMIAASIIITLLFL), 271–291 (FLFIPGALMIILKSSLVFFFF), and 311–331 (WKILLPLGILNVVITGFALLI).

This sequence belongs to the complex I subunit 1 family. As to quaternary structure, NDH-1 is composed of 14 different subunits. Subunits NuoA, H, J, K, L, M, N constitute the membrane sector of the complex.

The protein localises to the cell inner membrane. It carries out the reaction a quinone + NADH + 5 H(+)(in) = a quinol + NAD(+) + 4 H(+)(out). Its function is as follows. NDH-1 shuttles electrons from NADH, via FMN and iron-sulfur (Fe-S) centers, to quinones in the respiratory chain. The immediate electron acceptor for the enzyme in this species is believed to be ubiquinone. Couples the redox reaction to proton translocation (for every two electrons transferred, four hydrogen ions are translocated across the cytoplasmic membrane), and thus conserves the redox energy in a proton gradient. This subunit may bind ubiquinone. This Campylobacter concisus (strain 13826) protein is NADH-quinone oxidoreductase subunit H.